Reading from the N-terminus, the 275-residue chain is Large ribosomal subunit protein uL2c (275 aa).

The disordered stretch occupies residues 28-53; it reads TPTKSLTHANHRARGRNHSGSITTRW.

The protein belongs to the universal ribosomal protein uL2 family. Part of the 50S ribosomal subunit.

It localises to the plastid. The protein resides in the chloroplast. This Nephroselmis olivacea (Green alga) protein is Large ribosomal subunit protein uL2c (rpl2).